Consider the following 415-residue polypeptide: Cell division control protein 11 (415 aa).

An N-acetylserine modification is found at Ser2. At Ser2 the chain carries Phosphoserine. Residues 12–19 (RKRKHLKR) carry the Basic motif motif. The Septin-type G domain maps to 19 to 298 (RGITFTVMIV…ERYRTEALSG (280 aa)). The G1 motif stretch occupies residues 29-36 (GQSGSGRS). GTP is bound by residues 29–36 (GQSGSGRS), Gly92, 172–180 (KSDSLTRDE), Gly230, and Arg247. The tract at residues 89-92 (DTPG) is G3 motif. The G4 motif stretch occupies residues 171 to 174 (SKSD). Ser305 carries the phosphoserine modification. The tract at residues 307–360 (RPNLTKLNGSSSSSTTTRRNTNPFKQSNNINNDVLNPASDMHGQSTGENNETYM) is disordered. The segment covering 316-328 (SSSSSTTTRRNTN) has biased composition (low complexity). The residue at position 327 (Thr327) is a Phosphothreonine. Polar residues-rich tracts occupy residues 329–340 (PFKQSNNINNDV) and 348–359 (HGQSTGENNETY). Positions 354 to 414 (ENNETYMTRE…LEKEAKIKQE (61 aa)) form a coiled coil. Lys412 participates in a covalent cross-link: Glycyl lysine isopeptide (Lys-Gly) (interchain with G-Cter in SUMO).

It belongs to the TRAFAC class TrmE-Era-EngA-EngB-Septin-like GTPase superfamily. Septin GTPase family. As to quaternary structure, component of the septin complex which consists of CDC3, CDC10, CDC11, CDC12 and probably SHS1 and rearranges to a cortical collar of highly ordered filaments at the mother-bud-neck. A complex formed by CDC3, CDC10, CDC11 and CDC12 is capable of forming long filaments in vitro and the components seem to be present in a 2:2:2:2 arrangement in vivo. The filaments are proposed to be formed by the end-to-end polymerization of CDC3-CDC12-CDC11 complexes with CDC10 serving as a bridge to bundle the polymers into paired filaments. Component of the GIN4 complex composed of at least BNI5, CDC3, CDC10, CDC11, CDC12, GIN4, NAP1 and SHS1. Self-associates. Interacts with BEM4, KCC4, SPR28 and SYP1. Interacts with BNI5. In terms of processing, sumoylated during mitosis on the mother cell side of the bud neck. Sumoylation probably plays a central role in regulating septin ring disassembly during the cell cycle.

Its subcellular location is the membrane. The protein resides in the bud neck. Septins are GTPases involved in cytokinesis that assemble early in the cell cycle as a patch at the incipient bud site and form a ring approximate 15 minutes before bud emergence, which transforms into an hour-glass shaped collar of cortical filaments that spans both sides of the mother-bud neck. This collar persists until just before cytokinesis, when it splits into two rings that occupy opposite sides of the neck. The septins at the bud neck serve as a structural scaffold that recruits different components involved in diverse processes at specific stages during the cell cycle. Many proteins bind asymmetrically to the septin collar. The septin assembly is regulated by protein kinases GIN4 and/or CLA4. May act by recruiting MYO1 and HOF1, a protein involved in septation, to the site of cleavage. Septins are also involved in cell morphogenesis, bud site selection, chitin deposition, cell cycle regulation, cell compartmentalization and spore wall formation. CDCd11 with SHS1 11 are involved in the recruitment of BNI5 and thereby ensure efficient localization at the bud neck of MYO1, the type II myosin of the actomyosin contractile ring. This Saccharomyces cerevisiae (strain ATCC 204508 / S288c) (Baker's yeast) protein is Cell division control protein 11.